The primary structure comprises 261 residues: V-type proton ATPase subunit D (261 aa).

A Phosphoserine modification is found at S241.

This sequence belongs to the V-ATPase D subunit family. As to quaternary structure, V-ATPase is a heteromultimeric enzyme composed of a peripheral catalytic V1 complex (components A to H) attached to an integral membrane V0 proton pore complex (components: a, c, c'', d and e).

The protein localises to the vacuole membrane. In terms of biological role, subunit of the peripheral V1 complex of vacuolar ATPase. V-ATPase is responsible for acidifying a variety of intracellular compartments in eukaryotic cells, thus providing most of the energy required for transport processes in the vacuolar system. This chain is V-type proton ATPase subunit D (VHA-D), found in Arabidopsis thaliana (Mouse-ear cress).